The following is a 241-amino-acid chain: Proteasome subunit alpha type-5 (241 aa).

It belongs to the peptidase T1A family. As to quaternary structure, the 26S proteasome consists of a 20S proteasome core and two 19S regulatory subunits. The 20S proteasome core is composed of 28 subunits that are arranged in four stacked rings, resulting in a barrel-shaped structure. The two end rings are each formed by seven alpha subunits, and the two central rings are each formed by seven beta subunits. The catalytic chamber with the active sites is on the inside of the barrel.

The protein resides in the cytoplasm. It localises to the nucleus. Its function is as follows. The proteasome is a multicatalytic proteinase complex which is characterized by its ability to cleave peptides with Arg, Phe, Tyr, Leu, and Glu adjacent to the leaving group at neutral or slightly basic pH. The proteasome has an ATP-dependent proteolytic activity. In Dictyostelium discoideum (Social amoeba), this protein is Proteasome subunit alpha type-5 (psmA5).